The sequence spans 99 residues: Beta-2-microglobulin (99 aa).

The Ig-like C1-type domain maps to 5–92 (PNVQVYSRHP…KHVTLKEPMT (88 aa)). C25 and C80 are joined by a disulfide.

The protein belongs to the beta-2-microglobulin family. In terms of assembly, heterodimer of an alpha chain and a beta chain. Beta-2-microglobulin is the beta-chain of major histocompatibility complex class I molecules.

It is found in the secreted. In terms of biological role, component of the class I major histocompatibility complex (MHC). Involved in the presentation of peptide antigens to the immune system. The sequence is that of Beta-2-microglobulin (B2M) from Oryctolagus cuniculus (Rabbit).